The primary structure comprises 951 residues: MAAAAAAAAAVGVRLRDCCSRGAVLLLFFSLSPRPPAAAAWLLGLRPEDTAGGRVSLEGGTLRAAEGTSFLLRVYFQPGPPATAAPVPSPTLNSGENGTGDWAPRLVFIEEPPGGGGVAPSAVPTRPPGPQRCREQSDWASDVEVLGPLRPGGVAGSALVQVRVRELRKGEAERGGAGGGGKLFSLCAWDGRAWHHHGAAGGFLLRVRPRLYGPGGDLLPPAWLRALGALLLLALSALFSGLRLSLLSLDPVELRVLRNSGSAAEQEQARRVQAVRGRGTHLLCTLLLGQAGANAALAGWLYTSLPPGFGGTGEDYSEEGIHFPWLPALVCTGAVFLGAEICPYSVCSRHGLAIASHSVCLTRLLMAAAFPVCYPLGRLLDWALRQEISTFYTREKLLETLRAADPYSDLVKEELNIIQGALELRTKVVEEVLTPLGDCFMLRSDAVLDFATVSEILRSGYTRIPVYEGDQRHNIVDILFVKDLAFVDPDDCTPLLTVTRFYNRPLHCVFNDTRLDTVLEEFKKGKSHLAIVQRVNNEGEGDPFYEVMGIVTLEDIIEEIIKSEILDETDLYTDNRKKQRVPQRERKRHDFSLFKLSDTEMRVKISPQLLLATHRFMATEVEPFKSLYLSEKILLRLLKHPNVIQELKFDEKNKKAPEHYLYQRNRPVDYFVLLLQGKVEVEVGKEGLRFENGAFTYYGVPAIMTTACSDNDVRKVGSLAGSSVFLNRSPSRCSGLNRSESPNRERSDFGGSNTQLYSSSNNLYMPDYSVHILSDVQFVKITRQQYQNALTACHMDSSPQSPDMEAFTDGDSTKAPTTRGTPQTPKDDPAITLLNNRNSLPCSRSDGLRSPSEVVYLRMEELAFTQEEMTDFEEHSTQQLTLSPAAVPTRAASDSECCNINLDTETSPCSSDFEENVGKKLLRTLSGQKRKRSPEGERTSEDNSNLTPLIT.

A helical transmembrane segment spans residues 23–43 (AVLLLFFSLSPRPPAAAAWLL). The segment at 116–135 (GGVAPSAVPTRPPGPQRCRE) is disordered. The 197-residue stretch at 218–414 (LLPPAWLRAL…DPYSDLVKEE (197 aa)) folds into the CNNM transmembrane domain. Helical transmembrane passes span 222-242 (AWLR…FSGL), 282-302 (LLCT…GWLY), and 321-341 (IHFP…GAEI). 2 consecutive CBS domains span residues 433 to 495 (LTPL…CTPL) and 502 to 568 (YNRP…ILDE). Polar residues-rich tracts occupy residues 731 to 740 (SRCSGLNRSE) and 814 to 824 (KAPTTRGTPQT). 2 disordered regions span residues 731–753 (SRCS…GGSN) and 795–830 (MDSS…DDPA). A phosphothreonine mark is found at threonine 821 and threonine 824. Serine 850 bears the Phosphoserine mark. The interval 920–951 (KLLRTLSGQKRKRSPEGERTSEDNSNLTPLIT) is disordered. Positions 942–951 (DNSNLTPLIT) are enriched in polar residues.

Belongs to the ACDP family. In terms of tissue distribution, restricted to brain and testis.

It is found in the cell membrane. Its function is as follows. Probable metal transporter. The protein is Metal transporter CNNM1 (CNNM1) of Homo sapiens (Human).